The sequence spans 194 residues: Alkyl hydroperoxide reductase AhpD (194 aa).

C132 (proton donor) is an active-site residue. The cysteines at positions 132 and 135 are disulfide-linked. C135 (cysteine sulfenic acid (-SOH) intermediate) is an active-site residue.

The protein belongs to the AhpD family.

It carries out the reaction N(6)-[(R)-dihydrolipoyl]-L-lysyl-[lipoyl-carrier protein] + a hydroperoxide = N(6)-[(R)-lipoyl]-L-lysyl-[lipoyl-carrier protein] + an alcohol + H2O. Antioxidant protein with alkyl hydroperoxidase activity. Required for the reduction of the AhpC active site cysteine residues and for the regeneration of the AhpC enzyme activity. In Koribacter versatilis (strain Ellin345), this protein is Alkyl hydroperoxide reductase AhpD.